The sequence spans 59 residues: UPF0434 protein Shew_1640 (59 aa).

The protein belongs to the UPF0434 family.

The polypeptide is UPF0434 protein Shew_1640 (Shewanella loihica (strain ATCC BAA-1088 / PV-4)).